The chain runs to 333 residues: Chemokine XC receptor 1 (333 aa).

The Extracellular portion of the chain corresponds to 1–31 (MESSGNPESTTFFYYDLQSQPCENQAWVFAT). A helical transmembrane segment spans residues 32–59 (LATTVLYCLVFLLSLVGNSLVLWVLVKY). The Cytoplasmic portion of the chain corresponds to 60 to 69 (ESLESLTNIF). Residues 70–89 (ILNLCLSDLVFACLLPVWIS) form a helical membrane-spanning segment. Residues 90–103 (PYHWGWVLGDFLCK) are Extracellular-facing. C102 and C175 are oxidised to a cystine. A helical transmembrane segment spans residues 104-125 (LLNMIFSISLYSSIFFLTIMTI). At 126–142 (HRYLSVVSPLSTLRVPT) the chain is on the cytoplasmic side. The helical transmembrane segment at 143–167 (LRCRVLVTMAVWVASILSSILDTIF) threads the bilayer. The Extracellular portion of the chain corresponds to 168 to 190 (HKVLSSGCDYSELTWYLTSVYQH). Residues 191–209 (NLFFLLSLGIILFCYVEIL) traverse the membrane as a helical segment. The Cytoplasmic portion of the chain corresponds to 210–225 (RTLFRSRSKRRHRTVK). A helical transmembrane segment spans residues 226-250 (LIFAIVVAYFLSWGPYNFTLFLQTL). Residues 251–267 (FRTQIIRSCEAKQQLEY) lie on the Extracellular side of the membrane. Residues 268–291 (ALLICRNLAFSHCCFNPVLYVFVG) form a helical membrane-spanning segment. Residues 292 to 333 (VKFRTHLKHVLRQFWFCRLQAPSPASIPHSPGAFAYEGASFY) are Cytoplasmic-facing.

It belongs to the G-protein coupled receptor 1 family.

The protein localises to the cell membrane. Functionally, receptor for chemokines SCYC1 and SCYC2. Subsequently transduces a signal by increasing the intracellular calcium ions level. Receptor for XCL1/Lymphotactin. This is Chemokine XC receptor 1 (XCR1) from Homo sapiens (Human).